The following is a 175-amino-acid chain: Inorganic pyrophosphatase (175 aa).

Residues K30, R44, and Y56 each coordinate substrate. Mg(2+)-binding residues include D66, D71, and D103. Position 142 (Y142) interacts with substrate.

Belongs to the PPase family. As to quaternary structure, homohexamer. The cofactor is Mg(2+).

It localises to the cytoplasm. The catalysed reaction is diphosphate + H2O = 2 phosphate + H(+). Functionally, catalyzes the hydrolysis of inorganic pyrophosphate (PPi) forming two phosphate ions. The polypeptide is Inorganic pyrophosphatase (Yersinia pestis).